The following is a 209-amino-acid chain: Large ribosomal subunit protein uL4 (209 aa).

The disordered stretch occupies residues 46–72 (GTSSTKTRSEVRGSSKKPWKQKGTGRA). Residues 59–72 (SSKKPWKQKGTGRA) show a composition bias toward basic residues.

The protein belongs to the universal ribosomal protein uL4 family. Part of the 50S ribosomal subunit.

Its function is as follows. One of the primary rRNA binding proteins, this protein initially binds near the 5'-end of the 23S rRNA. It is important during the early stages of 50S assembly. It makes multiple contacts with different domains of the 23S rRNA in the assembled 50S subunit and ribosome. Forms part of the polypeptide exit tunnel. This is Large ribosomal subunit protein uL4 from Borreliella burgdorferi (strain ATCC 35210 / DSM 4680 / CIP 102532 / B31) (Borrelia burgdorferi).